A 276-amino-acid polypeptide reads, in one-letter code: Halorhodopsin (276 aa).

The propeptide occupies 1-20 (MTAASTTATTVLQATQSDVL). Pyrrolidone carboxylic acid is present on glutamine 21. Transmembrane regions (helical) follow at residues 31-51 (SSIW…VAMG), 61-81 (LIWV…AGLA), 109-129 (YLTW…LADT), 134-154 (LFTA…AALI), 162-182 (WVFY…LLVQ), 195-215 (IFGT…ILWA), and 220-240 (GVAL…DILA). Lysine 241 carries the N6-(retinylidene)lysine modification.

Belongs to the archaeal/bacterial/fungal opsin family. Post-translationally, the covalent binding of retinal to the apoprotein, bacterioopsin, generates bacteriorhodopsin.

The protein resides in the membrane. Its function is as follows. Light-driven chloride pump. This chain is Halorhodopsin (hop), found in Haloarcula marismortui (strain ATCC 43049 / DSM 3752 / JCM 8966 / VKM B-1809) (Halobacterium marismortui).